Reading from the N-terminus, the 729-residue chain is Catalase-peroxidase (729 aa).

The interval M1–R26 is disordered. Positions W97–Y219 form a cross-link, tryptophyl-tyrosyl-methioninium (Trp-Tyr) (with M-245). H98 acts as the Proton acceptor in catalysis. The tryptophyl-tyrosyl-methioninium (Tyr-Met) (with W-97) cross-link spans Y219–M245. A heme b-binding site is contributed by H260.

This sequence belongs to the peroxidase family. Peroxidase/catalase subfamily. Homodimer or homotetramer. Heme b is required as a cofactor. In terms of processing, formation of the three residue Trp-Tyr-Met cross-link is important for the catalase, but not the peroxidase activity of the enzyme.

The enzyme catalyses H2O2 + AH2 = A + 2 H2O. It catalyses the reaction 2 H2O2 = O2 + 2 H2O. Bifunctional enzyme with both catalase and broad-spectrum peroxidase activity. In Sinorhizobium medicae (strain WSM419) (Ensifer medicae), this protein is Catalase-peroxidase.